The following is a 62-amino-acid chain: Small EDRK-rich factor 1 (62 aa).

Basic and acidic residues-rich tracts occupy residues 1 to 30 (MARG…KEDS) and 50 to 62 (IANE…TTEK). Positions 1–62 (MARGNQREIA…EKKSMQTTEK (62 aa)) are disordered.

It belongs to the SERF family. As to quaternary structure, interacts with SNCA; this interaction promotes the aggregation of SNCA. In terms of tissue distribution, expressed in brain (at protein level). Highly expressed in the testis.

The protein localises to the cytoplasm. Its subcellular location is the cytosol. It localises to the nucleus. Positive regulator of amyloid protein aggregation and proteotoxicity. Induces conformational changes in amyloid proteins, such as APP, HTT, and SNCA, driving them into compact formations preceding the formation of aggregates. This is Small EDRK-rich factor 1 (Serf1) from Mus musculus (Mouse).